The sequence spans 162 residues: tRNA (cytidine(34)-2'-O)-methyltransferase (162 aa).

Positions 83, 105, 127, and 135 each coordinate S-adenosyl-L-methionine.

Belongs to the class IV-like SAM-binding methyltransferase superfamily. RNA methyltransferase TrmH family. TrmL subfamily. In terms of assembly, homodimer.

The protein localises to the cytoplasm. The catalysed reaction is cytidine(34) in tRNA + S-adenosyl-L-methionine = 2'-O-methylcytidine(34) in tRNA + S-adenosyl-L-homocysteine + H(+). The enzyme catalyses 5-carboxymethylaminomethyluridine(34) in tRNA(Leu) + S-adenosyl-L-methionine = 5-carboxymethylaminomethyl-2'-O-methyluridine(34) in tRNA(Leu) + S-adenosyl-L-homocysteine + H(+). Methylates the ribose at the nucleotide 34 wobble position in the two leucyl isoacceptors tRNA(Leu)(CmAA) and tRNA(Leu)(cmnm5UmAA). Catalyzes the methyl transfer from S-adenosyl-L-methionine to the 2'-OH of the wobble nucleotide. The polypeptide is tRNA (cytidine(34)-2'-O)-methyltransferase (Photorhabdus asymbiotica subsp. asymbiotica (strain ATCC 43949 / 3105-77) (Xenorhabdus luminescens (strain 2))).